Reading from the N-terminus, the 466-residue chain is Vimentin (466 aa).

Composition is skewed to low complexity over residues 1 to 13 (MSTR…SYRR) and 20 to 33 (TSSR…YVTT). Residues 1-33 (MSTRSVSSSSYRRMFGGSGTSSRPSSNRSYVTT) form a disordered region. The residue at position 2 (Ser-2) is an N-acetylserine. A head region spans residues 2-95 (STRSVSSSSY…FSLADAINTE (94 aa)). At Ser-5 the chain carries Phosphoserine. Residue Ser-7 is modified to Phosphoserine; by PKA and PKC; alternate. A glycan (O-linked (GlcNAc) serine; alternate) is linked at Ser-7. Ser-8 is subject to Phosphoserine. Phosphoserine; by PKC is present on residues Ser-9 and Ser-10. Thr-20 carries the phosphothreonine modification. The residue at position 21 (Ser-21) is a Phosphoserine; by PKC. At Ser-25 the chain carries Phosphoserine; by PKA and PKC. Ser-26 bears the Phosphoserine; by PKC mark. Residue Thr-33 is glycosylated (O-linked (GlcNAc) threonine). Ser-34 carries O-linked (GlcNAc) serine; alternate glycosylation. A Phosphoserine; by PKC; alternate modification is found at Ser-34. At Ser-39 the chain carries Phosphoserine; by CaMK2, PKA, PKC and ROCK2. Ser-42 is subject to Phosphoserine; by PKC. Phosphoserine; by PKA is present on Ser-47. At Ser-49 the chain carries Phosphoserine. Residue Ser-51 is modified to Phosphoserine; by PKA and PKC. The residue at position 53 (Tyr-53) is a Phosphotyrosine. Ser-55 and Ser-56 each carry phosphoserine. A Phosphotyrosine modification is found at Tyr-61. Ser-66 is modified (phosphoserine; by PKA and PKC). Phosphoserine; by AURKB and ROCK2 is present on Ser-72. Ser-73 carries the phosphoserine modification. A Phosphoserine; by CaMK2 modification is found at Ser-83. Ser-87 carries the post-translational modification Phosphoserine. The coil 1A stretch occupies residues 96–131 (FKNTRTNEKVELQELNDRFANYIDKVRFLEQQNKIL). Positions 96 to 131 (FKNTRTNEKVELQELNDRFANYIDKVRFLEQQNKIL) form a coiled coil. Positions 103–411 (EKVELQELND…KLLEGEESRI (309 aa)) constitute an IF rod domain. Lys-104 is covalently cross-linked (Glycyl lysine isopeptide (Lys-Gly) (interchain with G-Cter in SUMO2)). Position 117 is a phosphotyrosine (Tyr-117). An N6-acetyllysine; alternate mark is found at Lys-120, Lys-129, and Lys-139. Residues Lys-120 and Lys-129 each carry the N6-succinyllysine; alternate modification. Residues Lys-120, Lys-129, and Lys-139 each participate in a glycyl lysine isopeptide (Lys-Gly) (interchain with G-Cter in SUMO2); alternate cross-link. The segment at 132–153 (LAELEQLKGQGKSRLGDLYEEE) is linker 1. A Phosphoserine modification is found at Ser-144. Positions 154–245 (MRELRRQVDQ…KLHDEEIQEL (92 aa)) form a coiled coil. The segment at 154–245 (MRELRRQVDQ…KLHDEEIQEL (92 aa)) is coil 1B. Lys-168 is modified (N6-acetyllysine). At Lys-188 the chain carries N6-acetyllysine; alternate. Lys-188 carries the N6-succinyllysine; alternate modification. Residue Ser-214 is modified to Phosphoserine. Lys-223 bears the N6-acetyllysine; alternate mark. Lys-223 participates in a covalent cross-link: Glycyl lysine isopeptide (Lys-Gly) (interchain with G-Cter in SUMO2); alternate. Phosphoserine is present on Ser-226. Lys-235 bears the N6-acetyllysine mark. The linker 12 stretch occupies residues 246–268 (QAQIQEQHVQIDVDVSKPDLTAA). Lys-262 participates in a covalent cross-link: Glycyl lysine isopeptide (Lys-Gly) (interchain with G-Cter in SUMO2). A coil 2 region spans residues 269–407 (LRDVRQQYES…ATYRKLLEGE (139 aa)). At Lys-294 the chain carries N6-acetyllysine; alternate. Lys-294 is subject to N6-succinyllysine; alternate. Lys-294 participates in a covalent cross-link: Glycyl lysine isopeptide (Lys-Gly) (interchain with G-Cter in SUMO2); alternate. At Ser-299 the chain carries Phosphoserine. Residues 303 to 407 (NRNNDALRQA…ATYRKLLEGE (105 aa)) adopt a coiled-coil conformation. Lys-313 participates in a covalent cross-link: Glycyl lysine isopeptide (Lys-Gly) (interchain with G-Cter in SUMO2). At Ser-325 the chain carries Phosphoserine. Positions 326 to 329 (LTCE) match the [IL]-x-C-x-x-[DE] motif motif. Lys-373 is modified (N6-acetyllysine; alternate). Residue Lys-373 forms a Glycyl lysine isopeptide (Lys-Gly) (interchain with G-Cter in SUMO2); alternate linkage. Positions 408-466 (ESRISLPLPTFSSLNLRETNLESLPLVDTHSKRTLLIKTVETRDGQVINETSQHHDDLE) are tail. A phosphoserine mark is found at Ser-409, Ser-412, Ser-419, and Ser-420. Thr-426 is subject to Phosphothreonine. Ser-430 carries the phosphoserine modification. Thr-436 carries the post-translational modification Phosphothreonine. Residue Ser-438 is modified to Phosphoserine. Lys-439 is covalently cross-linked (Glycyl lysine isopeptide (Lys-Gly) (interchain with G-Cter in SUMO2)). At Lys-445 the chain carries N6-acetyllysine; alternate. Lys-445 bears the N6-succinyllysine; alternate mark. Residue Lys-445 forms a Glycyl lysine isopeptide (Lys-Gly) (interchain with G-Cter in SUMO2); alternate linkage. Residue Lys-445 forms a Glycyl lysine isopeptide (Lys-Gly) (interchain with G-Cter in SUMO1); alternate linkage. Phosphothreonine is present on residues Thr-446 and Thr-458. At Ser-459 the chain carries Phosphoserine.

The protein belongs to the intermediate filament family. Homomer assembled from elementary dimers. Identified in complexes that contain VIM, EZR, AHNAK, BFSP1, BFSP2, ANK2, PLEC, PRX and spectrin. Interacts with BCAS3. Interacts with LGSN. Interacts with SYNM. Interacts (via rod region) with PLEC (via CH 1 domain). Interacts with PLEC isoform 1C. Interacts with STK33. Interacts with LARP6. Interacts with RAB8B. Interacts with TOR1A; the interaction associates TOR1A with the cytoskeleton. Interacts with TOR1AIP1. Interacts with DIAPH1. Interacts with EPPK1; interaction is dependent of higher-order structure of intermediate filament. Interacts with the non-receptor tyrosine kinase SRMS; the interaction leads to phosphorylation of VIM. Interacts with NOD2. Interacts (via head region) with CORO1C. Interacts with HDGF. Interacts with PRKCE (via phorbol-ester/DAG-type 2 domain). Interacts with BFSP2. Interacts with PPL. Interacts with PKP1 and PKP2. Interacts with SCRIB (via PDZ domains); the interaction protects SCRIB from proteasomal degradation and facilitates SCRIB localization to intermediate filaments, the interaction is reduced by cell contact inhibition. Phosphorylation by PKN1 inhibits the formation of filaments. Filament disassembly during mitosis is promoted by phosphorylation at Ser-55 as well as by nestin. One of the most prominent phosphoproteins in various cells of mesenchymal origin. Phosphorylation is enhanced during cell division, at which time vimentin filaments are significantly reorganized. Phosphorylated at Ser-56 by CDK5 during neutrophil secretion in the cytoplasm. Phosphorylated by STK33. Phosphorylated on tyrosine residues by SRMS. In terms of processing, S-nitrosylation is induced by interferon-gamma and oxidatively-modified low-densitity lipoprotein (LDL(ox)) possibly implicating the iNOS-S100A8/9 transnitrosylase complex. Detected in eye lens fiber cells (at protein level). Expressed in retinal lens epithelial cells (at protein level). Expressed in Langerhans cells in the epidermis (at protein level).

It localises to the cytoplasm. It is found in the cytoskeleton. Its subcellular location is the nucleus matrix. The protein resides in the cell membrane. Functionally, vimentins are class-III intermediate filaments found in various non-epithelial cells, especially mesenchymal cells. Vimentin is attached to the nucleus, endoplasmic reticulum, and mitochondria, either laterally or terminally. Plays a role in cell directional movement, orientation, cell sheet organization and Golgi complex polarization at the cell migration front. Protects SCRIB from proteasomal degradation and facilitates its localization to intermediate filaments in a cell contact-mediated manner. Involved with LARP6 in the stabilization of type I collagen mRNAs for CO1A1 and CO1A2. This Mus musculus (Mouse) protein is Vimentin.